The following is a 412-amino-acid chain: Polyferredoxin protein MvhB (412 aa).

4Fe-4S ferredoxin-type domains lie at 1 to 29, 30 to 57, 67 to 96, 97 to 127, 138 to 166, 168 to 197, 207 to 236, 238 to 266, 276 to 305, 314 to 345, 357 to 386, and 385 to 412; these read MIVV…VTPE, DVIY…IEDL, GRIV…LDEG, KVKK…VEGI, EGPI…LEKV, GVIE…ISGK, RKFE…PKSS, LTVE…LDVE, EGLV…VVTR, EKVD…LVDM, KRVQ…LTDE, and DEKV…LSLK. Residues cysteine 9, cysteine 12, cysteine 15, and cysteine 19 each coordinate [4Fe-4S] cluster. [4Fe-4S] cluster-binding residues include cysteine 76, cysteine 79, cysteine 82, cysteine 86, cysteine 107, cysteine 110, cysteine 113, cysteine 117, cysteine 146, cysteine 149, cysteine 152, cysteine 156, cysteine 177, cysteine 180, cysteine 183, cysteine 187, cysteine 216, cysteine 219, cysteine 222, cysteine 226, cysteine 246, cysteine 249, cysteine 252, and cysteine 256. Residues cysteine 325, cysteine 328, cysteine 331, cysteine 335, cysteine 366, cysteine 369, cysteine 372, cysteine 376, cysteine 394, cysteine 397, cysteine 400, and cysteine 404 each coordinate [4Fe-4S] cluster.

Requires [4Fe-4S] cluster as cofactor.

This is Polyferredoxin protein MvhB (mvhB) from Methanothermobacter marburgensis (strain ATCC BAA-927 / DSM 2133 / JCM 14651 / NBRC 100331 / OCM 82 / Marburg) (Methanobacterium thermoautotrophicum).